A 607-amino-acid chain; its full sequence is Rap1 GTPase-GDP dissociation stimulator 1-A (607 aa).

ARM repeat units follow at residues 79–118 (ELMR…NICY), 170–211 (DSLQ…NLAE), 347–390 (DGNC…NLAI), 391–431 (PVVN…MLID), and 479–519 (SKDV…LIAA).

In terms of assembly, interacts with ralB. Probably interacts with the post-translationally isoprenylated (geranyl-geranylation) forms of ral proteins. Interacts with both GDP-bound and GTP-bound forms of ralA, but interaction is much stronger with ralA-GDP. Weakly expressed in adult tissues with highest levels found in spleen, kidney, skin and A6 cells.

The protein resides in the cytoplasm. It is found in the cytosol. Its subcellular location is the endoplasmic reticulum. It localises to the mitochondrion. Stimulates GDP/GTP exchange reaction of a group of small GTP-binding proteins (G proteins) including Rap1a/Rap1b, RhoA, RhoB and KRas, by stimulating the dissociation of GDP from and the subsequent binding of GTP to each small G protein. The sequence is that of Rap1 GTPase-GDP dissociation stimulator 1-A (rap1gds1-a) from Xenopus laevis (African clawed frog).